Consider the following 776-residue polypeptide: MSEAVRVPSPATPLVVAAPAPEERKGKESEREKLPPIVSAGAGATAGLDRGAKGQISTFSSFISAVSPKKEAAENRSSPAHLVFPNIKNVREPPPICLDVRQKQRTSMDASSSEMKAPVLPEPILPIQPKTVKDFQEDVEKVKSSGDWKAVHDFYLTTFDSFPELNAAFKKDATASFNTIEDSGINAKFVNAVYDTLLNTPQDVQKTVLKGIINSLLREWKGPRTKDDLRAYFILLQNPQFNNTSTYVIYAHLLRQIATLVEADHHFLVHWFKKLSQKRFKQLVERLLQFISLRLFPAKPEEFPPITKCSWWIPSAAKVLALLNTANNLVHPPLIPYTDFYNSTLDHIDLMEEYHTWQNFGNSHRFSFCQYPFVISVAAKKIIIQRDSEQQMINIARQSLVDKVSRRQRPDMNILFLNMKVRRTHLVSDSLDELTRKRADLKKKLKVTFVGEAGLDMGGLTKEWFLLLIRQIFHPDYGMFTYHKDSHCHWFSSFKCDNYSEFRLVGILMGLAVYNSITLDIRFPPCCYKKLLSPPIIPSDQNIPVGICNVTVDDLCQIMPELAHGLSELLSHEGNVEEDFYSTFQVFQEEFGIIKSYNLKPGGDKISVTNQNRKEYVQLYTDFLLNKSIYKQFAAFYYGFHSVCASNALMLLRPEEVEILVCGSPDLDMHALQRSTQYDGYAKTDLTIKYFWDVVLGFPLDLQKKLLHFTTGSDRVPVGGMADLNFKISKNETSTNCLPVAHTCFNQLCLPPYKSKKDLKQKLIIGISNSEGFGLE.

The interval 1–46 (MSEAVRVPSPATPLVVAAPAPEERKGKESEREKLPPIVSAGAGATA) is disordered. The segment covering 7 to 20 (VPSPATPLVVAAPA) has biased composition (low complexity). Serine 9 is subject to Phosphoserine. The segment covering 21-34 (PEERKGKESEREKL) has biased composition (basic and acidic residues). The HECT domain occupies 437–776 (KRADLKKKLK…ISNSEGFGLE (340 aa)). Cysteine 744 functions as the Glycyl thioester intermediate in the catalytic mechanism.

The enzyme catalyses S-ubiquitinyl-[E2 ubiquitin-conjugating enzyme]-L-cysteine + [acceptor protein]-L-lysine = [E2 ubiquitin-conjugating enzyme]-L-cysteine + N(6)-ubiquitinyl-[acceptor protein]-L-lysine.. Its pathway is protein modification; protein ubiquitination. In terms of biological role, E3 ubiquitin-protein ligase which accepts ubiquitin from an E2 ubiquitin-conjugating enzyme in the form of a thioester and then directly transfers the ubiquitin to targeted substrates. Functionally, (Microbial infection) Catalyzes ubiquitination of Botulinum neurotoxin A light chain (LC) of C.botulinum neurotoxin type A (BoNT/A). This chain is Probable E3 ubiquitin-protein ligase HECTD2, found in Homo sapiens (Human).